The sequence spans 860 residues: Leucine--tRNA ligase (860 aa).

The 'HIGH' region signature appears at Pro42 to His52. The 'KMSKS' region signature appears at Lys619–Ser623. Residue Lys622 participates in ATP binding.

The protein belongs to the class-I aminoacyl-tRNA synthetase family.

It localises to the cytoplasm. The enzyme catalyses tRNA(Leu) + L-leucine + ATP = L-leucyl-tRNA(Leu) + AMP + diphosphate. This chain is Leucine--tRNA ligase, found in Proteus mirabilis (strain HI4320).